A 282-amino-acid polypeptide reads, in one-letter code: Tetraspanin-6 (282 aa).

Topologically, residues 1–7 (MYRFSNT) are cytoplasmic. Residues 8–28 (VIGVLNLLTLLASIPIIGTAL) form a helical membrane-spanning segment. Over 29-44 (YKARSSTTCENFLQTP) the chain is Extracellular. A helical membrane pass occupies residues 45 to 65 (LLVIGFIILIVSLAGFIGACF). The Cytoplasmic segment spans residues 66–74 (NVAWALWVY). A helical membrane pass occupies residues 75–95 (LVVMIFLIATLMGLTLFGLVV). Over 96 to 220 (TSQGGGVEVP…EIRLDWRKLS (125 aa)) the chain is Extracellular. The helical transmembrane segment at 221 to 241 (VVNILVLVLLIAVYAAGCCAF) threads the bilayer. Topologically, residues 242 to 282 (HNTRHAAHPYHPSDDNRMTRVRPRWDYYWWRWWHEKKEQLY) are cytoplasmic.

It belongs to the tetraspanin (TM4SF) family.

It localises to the membrane. In terms of biological role, may be involved in the regulation of cell differentiation. The chain is Tetraspanin-6 (TET6) from Arabidopsis thaliana (Mouse-ear cress).